The sequence spans 430 residues: ATP-dependent RNA helicase cgh-1 (430 aa).

The short motif at 43-71 (VEFEDFCLGRDLLMGIFEKGWEKPSPIQE) is the Q motif element. Residues 74–244 (IGVALTGQDI…QKHMHKPYEI (171 aa)) form the Helicase ATP-binding domain. 87–94 (AKNGTGKT) is an ATP binding site. The short motif at 192–195 (DEAD) is the DEAD box element. Residues 254–414 (GVTQYYAFVQ…PIPKTVDPKL (161 aa)) enclose the Helicase C-terminal domain.

This sequence belongs to the DEAD box helicase family. DDX6/DHH1 subfamily. In terms of assembly, interacts with car-1 in a germline ribonucleoprotein complex. Interacts with ifet-1. Interacts with oma-1, which is a component of a ribonucleoprotein complex, in an RNA-dependent manner. Expression is restricted to two germline precursors Z2 and Z3 in L1 stage hermaphrodites, and is detectable specifically in the gonad at low levels into the L3 stage. Expression is significantly higher during the early L4 stage. In adults, expression remains gonad-specific and was not apparent in the somatically derived uterus. Expressed in germ granules (P granules); when associated with pgl-1.

Its subcellular location is the cytoplasm. The enzyme catalyses ATP + H2O = ADP + phosphate + H(+). Its function is as follows. Probable RNA helicase required for oocyte and sperm function. Also required to prevent the physiological germline apoptosis mechanism killing essentially all developing oocytes. This Caenorhabditis elegans protein is ATP-dependent RNA helicase cgh-1 (cgh-1).